The chain runs to 351 residues: Anthranilate phosphoribosyltransferase (351 aa).

Residues Gly-84, 87–88 (GD), 95–98 (NISS), 113–121 (KHGNRGASS), and Ala-125 contribute to the 5-phospho-alpha-D-ribose 1-diphosphate site. Gly-84 is an anthranilate binding site. Ser-97 contributes to the Mg(2+) binding site. Asn-116 serves as a coordination point for anthranilate. Arg-171 provides a ligand contact to anthranilate. Mg(2+) is bound by residues Asp-229 and Lys-230.

It belongs to the anthranilate phosphoribosyltransferase family. Homodimer. The cofactor is Mg(2+).

The enzyme catalyses N-(5-phospho-beta-D-ribosyl)anthranilate + diphosphate = 5-phospho-alpha-D-ribose 1-diphosphate + anthranilate. It functions in the pathway amino-acid biosynthesis; L-tryptophan biosynthesis; L-tryptophan from chorismate: step 2/5. Catalyzes the transfer of the phosphoribosyl group of 5-phosphorylribose-1-pyrophosphate (PRPP) to anthranilate to yield N-(5'-phosphoribosyl)-anthranilate (PRA). This is Anthranilate phosphoribosyltransferase from Clavibacter sepedonicus (Clavibacter michiganensis subsp. sepedonicus).